A 213-amino-acid polypeptide reads, in one-letter code: MDSEKILNAVKEARTLAKPRNFTQSVDLIVNLKELDLSRPENRLKEQIVLPSGRGKDVAIAVIAKGDLAAQAEDMGLTVIRQEELEELGKNKKTAKKIANAHGFFIAQADMMPLVGKSLGPVLGPRGKMPQPVPANANLAPLVARFQKTVAINTRDKALFQVYIGTESMSDDELAANAEAILNVVSKKYEKGLYHVKNAFTKLTMGAAAPIEK.

Belongs to the universal ribosomal protein uL1 family. As to quaternary structure, part of the 50S ribosomal subunit.

Functionally, binds directly to 23S rRNA. Probably involved in E site tRNA release. In terms of biological role, protein L1 is also a translational repressor protein, it controls the translation of its operon by binding to its mRNA. The protein is Large ribosomal subunit protein uL1 of Methanococcus maripaludis (strain DSM 14266 / JCM 13030 / NBRC 101832 / S2 / LL).